Here is a 311-residue protein sequence, read N- to C-terminus: Ribosomal RNA small subunit methyltransferase H (311 aa).

S-adenosyl-L-methionine-binding positions include 32–34 (AGH), Asp52, Phe79, Asp100, and Gln107.

It belongs to the methyltransferase superfamily. RsmH family.

The protein localises to the cytoplasm. The catalysed reaction is cytidine(1402) in 16S rRNA + S-adenosyl-L-methionine = N(4)-methylcytidine(1402) in 16S rRNA + S-adenosyl-L-homocysteine + H(+). Its function is as follows. Specifically methylates the N4 position of cytidine in position 1402 (C1402) of 16S rRNA. The chain is Ribosomal RNA small subunit methyltransferase H from Staphylococcus aureus (strain COL).